Here is a 107-residue protein sequence, read N- to C-terminus: Small ribosomal subunit protein bS16m (107 aa).

Belongs to the bacterial ribosomal protein bS16 family. As to quaternary structure, component of the mitochondrial small ribosomal subunit (mt-SSU). Mature N.crassa 74S mitochondrial ribosomes consist of a small (37S) and a large (54S) subunit. The 37S small subunit contains a 16S ribosomal RNA (16S mt-rRNA) and 32 different proteins. The 54S large subunit contains a 23S rRNA (23S mt-rRNA) and 42 different proteins.

It localises to the mitochondrion. In terms of biological role, component of the mitochondrial ribosome (mitoribosome), a dedicated translation machinery responsible for the synthesis of mitochondrial genome-encoded proteins, including at least some of the essential transmembrane subunits of the mitochondrial respiratory chain. The mitoribosomes are attached to the mitochondrial inner membrane and translation products are cotranslationally integrated into the membrane. This chain is Small ribosomal subunit protein bS16m (cyt-21), found in Neurospora crassa (strain ATCC 24698 / 74-OR23-1A / CBS 708.71 / DSM 1257 / FGSC 987).